The chain runs to 213 residues: Protein-L-isoaspartate O-methyltransferase (213 aa).

Residue Ser-62 is part of the active site.

This sequence belongs to the methyltransferase superfamily. L-isoaspartyl/D-aspartyl protein methyltransferase family.

It localises to the cytoplasm. It carries out the reaction [protein]-L-isoaspartate + S-adenosyl-L-methionine = [protein]-L-isoaspartate alpha-methyl ester + S-adenosyl-L-homocysteine. In terms of biological role, catalyzes the methyl esterification of L-isoaspartyl residues in peptides and proteins that result from spontaneous decomposition of normal L-aspartyl and L-asparaginyl residues. It plays a role in the repair and/or degradation of damaged proteins. This chain is Protein-L-isoaspartate O-methyltransferase, found in Idiomarina loihiensis (strain ATCC BAA-735 / DSM 15497 / L2-TR).